Reading from the N-terminus, the 103-residue chain is CLAVATA3/ESR (CLE)-related protein 16 (103 aa).

The first 21 residues, 1–21 (MEACSRKRRRRRAYTTSTTGY), serve as a signal peptide directing secretion. The segment at 71 to 103 (VSFTGQRREEENRDEVYKDDKRLVHTGPNPLHN) is disordered. The span at 76–93 (QRREEENRDEVYKDDKRL) shows a compositional bias: basic and acidic residues. At P98 the chain carries Hydroxyproline. P98 is a glycosylation site (O-linked (Ara...) hydroxyproline).

Belongs to the CLV3/ESR signal peptide family. The O-glycosylation (arabinosylation) of the hydroxyproline Pro-98 enhances binding affinity of the CLE16p peptide for its receptor. As to expression, expressed in roots, stems, apex, seedlings, leaves, flowers and siliques.

The protein resides in the secreted. The protein localises to the extracellular space. Functionally, extracellular signal peptide that regulates cell fate. Represses root apical meristem maintenance. Regulates the transition of protophloem cells from proliferation to differentiation, thus impinging on postembryonic growth capacity of the root meristem; this signaling pathway requires CRN and CLV2. The protein is CLAVATA3/ESR (CLE)-related protein 16 of Arabidopsis thaliana (Mouse-ear cress).